Reading from the N-terminus, the 124-residue chain is Small ribosomal subunit protein uS12 (124 aa).

Asp89 is subject to 3-methylthioaspartic acid.

The protein belongs to the universal ribosomal protein uS12 family. In terms of assembly, part of the 30S ribosomal subunit. Contacts proteins S8 and S17. May interact with IF1 in the 30S initiation complex.

Its function is as follows. With S4 and S5 plays an important role in translational accuracy. Interacts with and stabilizes bases of the 16S rRNA that are involved in tRNA selection in the A site and with the mRNA backbone. Located at the interface of the 30S and 50S subunits, it traverses the body of the 30S subunit contacting proteins on the other side and probably holding the rRNA structure together. The combined cluster of proteins S8, S12 and S17 appears to hold together the shoulder and platform of the 30S subunit. This Moorella thermoacetica (strain ATCC 39073 / JCM 9320) protein is Small ribosomal subunit protein uS12.